A 270-amino-acid polypeptide reads, in one-letter code: Ribosomal RNA small subunit methyltransferase A (270 aa).

Residues asparagine 18, leucine 20, glycine 45, glutamate 66, aspartate 91, and asparagine 112 each coordinate S-adenosyl-L-methionine.

This sequence belongs to the class I-like SAM-binding methyltransferase superfamily. rRNA adenine N(6)-methyltransferase family. RsmA subfamily.

It is found in the cytoplasm. The catalysed reaction is adenosine(1518)/adenosine(1519) in 16S rRNA + 4 S-adenosyl-L-methionine = N(6)-dimethyladenosine(1518)/N(6)-dimethyladenosine(1519) in 16S rRNA + 4 S-adenosyl-L-homocysteine + 4 H(+). Specifically dimethylates two adjacent adenosines (A1518 and A1519) in the loop of a conserved hairpin near the 3'-end of 16S rRNA in the 30S particle. May play a critical role in biogenesis of 30S subunits. In Psychromonas ingrahamii (strain DSM 17664 / CCUG 51855 / 37), this protein is Ribosomal RNA small subunit methyltransferase A.